A 398-amino-acid chain; its full sequence is Acetate kinase (398 aa).

Residue Asn7 participates in Mg(2+) binding. An ATP-binding site is contributed by Lys14. Substrate is bound at residue Arg91. Asp148 acts as the Proton donor/acceptor in catalysis. ATP is bound by residues 208 to 212 (HIGNG), 283 to 285 (DMR), and 331 to 335 (GVGEN). Residue Glu384 coordinates Mg(2+).

It belongs to the acetokinase family. In terms of assembly, homodimer. It depends on Mg(2+) as a cofactor. Requires Mn(2+) as cofactor.

It localises to the cytoplasm. It carries out the reaction acetate + ATP = acetyl phosphate + ADP. The protein operates within metabolic intermediate biosynthesis; acetyl-CoA biosynthesis; acetyl-CoA from acetate: step 1/2. Functionally, catalyzes the formation of acetyl phosphate from acetate and ATP. Can also catalyze the reverse reaction. The polypeptide is Acetate kinase (Phocaeicola vulgatus (strain ATCC 8482 / DSM 1447 / JCM 5826 / CCUG 4940 / NBRC 14291 / NCTC 11154) (Bacteroides vulgatus)).